A 126-amino-acid chain; its full sequence is Small ribosomal subunit protein uS13 (126 aa).

Residues 96–126 (LPVRGQQTKTNARTRKGRRKGTVANKKKVSK) form a disordered region. A compositionally biased stretch (basic residues) spans 107–126 (ARTRKGRRKGTVANKKKVSK).

This sequence belongs to the universal ribosomal protein uS13 family. In terms of assembly, part of the 30S ribosomal subunit. Forms a loose heterodimer with protein S19. Forms two bridges to the 50S subunit in the 70S ribosome.

Located at the top of the head of the 30S subunit, it contacts several helices of the 16S rRNA. In the 70S ribosome it contacts the 23S rRNA (bridge B1a) and protein L5 of the 50S subunit (bridge B1b), connecting the 2 subunits; these bridges are implicated in subunit movement. Contacts the tRNAs in the A and P-sites. The polypeptide is Small ribosomal subunit protein uS13 (Hydrogenobaculum sp. (strain Y04AAS1)).